A 356-amino-acid polypeptide reads, in one-letter code: Carminomycin 4-O-methyltransferase DauK (356 aa).

Arg153 is an S-adenosyl-L-methionine binding site. A substrate-binding site is contributed by Asp163. S-adenosyl-L-methionine-binding positions include Gly187, Glu210, 237-238 (DF), and Ser252. Substrate contacts are provided by Asn257 and Arg303.

Belongs to the class I-like SAM-binding methyltransferase superfamily. Cation-independent O-methyltransferase family. As to quaternary structure, homodimer and homotetramer in equilibrium.

The catalysed reaction is carminomycin + S-adenosyl-L-methionine = daunorubicin + S-adenosyl-L-homocysteine + H(+). Its pathway is antibiotic biosynthesis; daunorubicin biosynthesis. It participates in antibiotic biosynthesis; carminomycin biosynthesis. With respect to regulation, strongly inhibited by S-adenosyl-L-homocysteine and weakly by adenine and methionine. Involved in the biosynthesis of the anthracyclines carminomycin and daunorubicin (daunomycin) which are aromatic polyketide antibiotics that exhibit high cytotoxicity and are widely applied in the chemotherapy of a variety of cancers. In vivo, catalyzes the transfer of a methyl group from S-adenosyl-L-methionine to the 4-O-position of carminomycin to form daunorubicin. In vitro, it also methylates the anthracyclines rhodomycin D (10-carbomethoxy-13-deoxycarminomycin), 10-carboxy-13-deoxycarminomycin, 13-deoxy-carminomycin and 13-dihydrocarminomycin at the 4-hydroxyl position. The polypeptide is Carminomycin 4-O-methyltransferase DauK (dauK) (Streptomyces sp. (strain C5)).